Reading from the N-terminus, the 491-residue chain is Zinc finger protein 655 (491 aa).

The segment at M1–E52 is disordered. Residues V15–C26 are compositionally biased toward polar residues. Q60 bears the Phosphoserine mark. Residues K77, K190, and K201 each participate in a glycyl lysine isopeptide (Lys-Gly) (interchain with G-Cter in SUMO2) cross-link. 6 consecutive C2H2-type zinc fingers follow at residues Y212–H234, Y240–H262, Y303–H325, C330–H353, Y380–H402, and H408–H430.

It belongs to the krueppel C2H2-type zinc-finger protein family. In terms of assembly, interacts with VAV1 and CDK4. Interacts with INTS13; promoting association with the integrator complex.

Its subcellular location is the nucleus. In terms of biological role, probable transcription factor. The chain is Zinc finger protein 655 from Homo sapiens (Human).